Reading from the N-terminus, the 315-residue chain is DNA-directed RNA polymerase subunit alpha (315 aa).

Residues 1–228 form an alpha N-terminal domain (alpha-NTD) region; sequence MLEIEKPKIE…EHLRLFIGLT (228 aa). Residues 245–315 form an alpha C-terminal domain (alpha-CTD) region; it reads KDKILEMTIE…LGLGFRKADD (71 aa).

The protein belongs to the RNA polymerase alpha chain family. Homodimer. The RNAP catalytic core consists of 2 alpha, 1 beta, 1 beta' and 1 omega subunit. When a sigma factor is associated with the core the holoenzyme is formed, which can initiate transcription.

The catalysed reaction is RNA(n) + a ribonucleoside 5'-triphosphate = RNA(n+1) + diphosphate. Its function is as follows. DNA-dependent RNA polymerase catalyzes the transcription of DNA into RNA using the four ribonucleoside triphosphates as substrates. This chain is DNA-directed RNA polymerase subunit alpha, found in Desulfitobacterium hafniense (strain DSM 10664 / DCB-2).